The chain runs to 319 residues: Acetyl-coenzyme A carboxylase carboxyl transferase subunit alpha (319 aa).

One can recognise a CoA carboxyltransferase C-terminal domain in the interval 38-292; that stretch reads ALDKKAETLL…GKAIEMMLKE (255 aa).

The protein belongs to the AccA family. As to quaternary structure, acetyl-CoA carboxylase is a heterohexamer composed of biotin carboxyl carrier protein (AccB), biotin carboxylase (AccC) and two subunits each of ACCase subunit alpha (AccA) and ACCase subunit beta (AccD).

Its subcellular location is the cytoplasm. It carries out the reaction N(6)-carboxybiotinyl-L-lysyl-[protein] + acetyl-CoA = N(6)-biotinyl-L-lysyl-[protein] + malonyl-CoA. The protein operates within lipid metabolism; malonyl-CoA biosynthesis; malonyl-CoA from acetyl-CoA: step 1/1. Its function is as follows. Component of the acetyl coenzyme A carboxylase (ACC) complex. First, biotin carboxylase catalyzes the carboxylation of biotin on its carrier protein (BCCP) and then the CO(2) group is transferred by the carboxyltransferase to acetyl-CoA to form malonyl-CoA. The polypeptide is Acetyl-coenzyme A carboxylase carboxyl transferase subunit alpha (Cereibacter sphaeroides (strain ATCC 17029 / ATH 2.4.9) (Rhodobacter sphaeroides)).